A 135-amino-acid chain; its full sequence is Transcriptional activator protein (135 aa).

The Nuclear localization signal signature appears at 17-32 (KIQHHIAKKRQVRRRR). Residues 37-54 (CGCSYYIHLDCINHGFTH) fold into a zinc finger. A transactivation region spans residues 120 to 135 (HLDDLTVSDWSFFKSL).

Belongs to the geminiviridae transcriptional activator protein family. Monomer. Homodimer. Homooligomer. Self-interaction correlates with nuclear localization and efficient activation of transcription. Monomers suppress local silencing by interacting with and inactivating host adenosine kinase 2 (ADK2) in the cytoplasm. Interacts with and inhibits host SNF1 kinase. Binds to ssDNA. May interact with host RPS27A. In terms of processing, phosphorylated.

It is found in the host nucleus. The protein resides in the host cytoplasm. In terms of biological role, multifunctional protein that modulates host antiviral defenses and promotes host attractiveness to insect vectors. Acts as a suppressor of RNA-mediated gene silencing, also known as post-transcriptional gene silencing (PTGS), a mechanism of plant viral defense that limits the accumulation of viral RNAs. TrAP suppresses the host RNA silencing by inhibiting adenosine kinase 2 (ADK2), a kinase involved in a general methylation pathway. Also suppresses the host basal defense by interacting with and inhibiting SNF1 kinase, a key regulator of cell metabolism implicated in innate antiviral defense. Inhibits signal transduction by the phytohormone jasmonate, making the infected plant more attractive to aphids, which are the second host to play a role as a dissemination vector. Acts by binding to ubiquitin precursor RPS27A, thereby preventing ubiquitin degradation of JAZ. The protein is Transcriptional activator protein of Capsicum annuum (Capsicum pepper).